The primary structure comprises 771 residues: Caldesmon (771 aa).

2 disordered regions span residues 23–91 and 104–599; these read ERLS…ALLE and LQEA…FSPK. The interval 26–199 is myosin and calmodulin-binding; the sequence is SYQRNDDDEE…PKEVPTEENQ (174 aa). Residue Y27 is modified to Phosphotyrosine. Composition is skewed to basic and acidic residues over residues 47–67, 104–115, 139–155, 170–194, 203–215, 240–435, 442–484, 509–518, and 525–592; these read QERLRQKEEGDVSGEVTEKSE, LQEALERQKEFD, ITGKEEKVETRQGRCEI, WRQDGEEEGKKEEKDSEEEKPKEVP, AVEKSTDKEEVVE, AADK…ESLP, SKKD…RELT, GSEKLKEKQQ, and DELK…EKKP. 10 tandem repeats follow at residues 251–265, 266–278, 279–291, 294–306, 309–321, 324–336, 337–349, 350–362, 363–375, and 378–390. Residues 251-390 form a 10 X 13 AA approximate tandem repeats region; it reads EREKLEAEEK…KRAAEEKARL (140 aa). The tract at residues 523–580 is tropomyosin-binding; the sequence is ELDELKKRREERRKILEEEEQKKKQEEAERKIREEEEKKRMKEEIERRRAEAAEKRQK. S597 bears the Phosphoserine; by CDK1 mark. The tract at residues 612–644 is strong actin-binding; the sequence is LNKSAQKSGMKPAHTTAVVSKIDSRLEQYTSAV. A tropomyosin-binding region spans residues 622 to 632; the sequence is KPAHTTAVVSK. Y640 carries the post-translational modification Phosphotyrosine. Residues 674–680 are calmodulin-binding; that stretch reads WEKGNVF. A disordered region spans residues 676-771; it reads KGNVFSSPGG…NGLRQFEKEP (96 aa). Polar residues predominate over residues 679 to 691; sequence VFSSPGGTGTPNK. S682 is subject to Phosphoserine; by CDK1. 2 positions are modified to phosphothreonine; by CDK1: T688 and T711. The residue at position 717 (S717) is a Phosphoserine; by CDK1. Over residues 723–742 the composition is skewed to basic and acidic residues; sequence SDLRPGDVSGKRNLWEKQSV. Residues 726–752 form a weak actin-binding region; that stretch reads RPGDVSGKRNLWEKQSVEKPAASSSKV.

The protein belongs to the caldesmon family. Post-translationally, phosphorylated in non-muscle cells. Phosphorylation by CDK1 during mitosis causes caldesmon to dissociate from microfilaments. Phosphorylation reduces caldesmon binding to actin, myosin, and calmodulin as well as its inhibition of actomyosin ATPase activity. Phosphorylation also occurs in both quiescent and dividing smooth muscle cells with similar effects on the interaction with actin and calmodulin and on microfilaments reorganization. High-molecular-weight caldesmon (h-caldesmon) is predominantly expressed in smooth muscles, whereas low-molecular-weight caldesmon (l-caldesmon) is widely distributed in non-muscle tissues and cells. Not expressed in skeletal muscle or heart.

The protein resides in the cytoplasm. Its subcellular location is the cytoskeleton. It localises to the myofibril. The protein localises to the stress fiber. In terms of biological role, actin- and myosin-binding protein implicated in the regulation of actomyosin interactions in smooth muscle and nonmuscle cells (could act as a bridge between myosin and actin filaments). Stimulates actin binding of tropomyosin which increases the stabilization of actin filament structure. In muscle tissues, inhibits the actomyosin ATPase by binding to F-actin. This inhibition is attenuated by calcium-calmodulin and is potentiated by tropomyosin. Interacts with actin, myosin, two molecules of tropomyosin and with calmodulin. Also plays an essential role during cellular mitosis and receptor capping. The sequence is that of Caldesmon (CALD1) from Gallus gallus (Chicken).